Consider the following 234-residue polypeptide: MAMDPNEIALFRIDITEFIDKCLISLNNNFSTDQEFKFLKQLMNYYYRTKFLYTKKTENSDNEESISDLNSDNPGNSEPSDVESFVLSDEDENSEKDFSYGEFSDYDDKSIQCKILGINSDDETNCDNDQDIPVVRQKTTNKKSTHHKFQEETISIDQLIQECRVFYDKNTHKTNDTDKETIQNINSISEAGEYIVNSLSPCFNLSVVESSMEFIDGSDNIDYTDPTEYCNIVS.

Residues 62 to 99 (NEESISDLNSDNPGNSEPSDVESFVLSDEDENSEKDFS) form a disordered region. Residues 67–79 (SDLNSDNPGNSEP) are compositionally biased toward polar residues.

This is an uncharacterized protein from Acanthamoeba polyphaga (Amoeba).